The following is a 450-amino-acid chain: Phosphoglucosamine mutase (450 aa).

The active-site Phosphoserine intermediate is the Ser97. Ser97, Asp236, Asp238, and Asp240 together coordinate Mg(2+). Ser97 carries the post-translational modification Phosphoserine.

Belongs to the phosphohexose mutase family. It depends on Mg(2+) as a cofactor. In terms of processing, activated by phosphorylation.

It catalyses the reaction alpha-D-glucosamine 1-phosphate = D-glucosamine 6-phosphate. Its function is as follows. Catalyzes the conversion of glucosamine-6-phosphate to glucosamine-1-phosphate. This Prochlorococcus marinus (strain MIT 9215) protein is Phosphoglucosamine mutase.